The chain runs to 258 residues: Exosome complex component Rrp41 (258 aa).

This sequence belongs to the RNase PH family. Rrp41 subfamily. In terms of assembly, component of the archaeal exosome complex. Forms a hexameric ring-like arrangement composed of 3 Rrp41-Rrp42 heterodimers. The hexameric ring associates with a trimer of Rrp4 and/or Csl4 subunits.

Its subcellular location is the cytoplasm. Its function is as follows. Catalytic component of the exosome, which is a complex involved in RNA degradation. Has 3'-&gt;5' exoribonuclease activity. Can also synthesize heteromeric RNA-tails. This is Exosome complex component Rrp41 from Archaeoglobus fulgidus (strain ATCC 49558 / DSM 4304 / JCM 9628 / NBRC 100126 / VC-16).